We begin with the raw amino-acid sequence, 290 residues long: L-cysteine S-thiosulfotransferase subunit SoxA (290 aa).

The first 26 residues, 1–26, serve as a signal peptide directing secretion; that stretch reads MPRFTKTKGTLAATALGLALAGAAFA. Residues aspartate 78 and aspartate 81 each coordinate Zn(2+). The region spanning 78–171 is the Cytochrome c domain; the sequence is DDFDNPAMVF…DMLSLISLQS (94 aa). Cysteine 106, cysteine 109, histidine 110, and cysteine 143 together coordinate heme c. Histidine 190 is a binding site for Zn(2+). The heme c site is built by cysteine 206, cysteine 209, and histidine 210. Residue arginine 247 participates in substrate binding. Cysteine 251 lines the heme c pocket. Cysteine 251 acts as the Cysteine persulfide intermediate in catalysis. Position 266 (aspartate 266) interacts with Zn(2+).

This sequence belongs to the SoxA family. Heterodimer of SoxA and SoxX. Requires heme c as cofactor. The cofactor is Zn(2+). Cysteine persulfide at Cys-251.

The protein resides in the periplasm. It catalyses the reaction L-cysteinyl-[SoxY protein] + thiosulfate + 2 Fe(III)-[cytochrome c] = S-sulfosulfanyl-L-cysteinyl-[SoxY protein] + 2 Fe(II)-[cytochrome c] + 2 H(+). The enzyme catalyses S-sulfanyl-L-cysteinyl-[SoxY protein] + thiosulfate + 2 Fe(III)-[cytochrome c] = S-(2-sulfodisulfanyl)-L-cysteinyl-[SoxY protein] + 2 Fe(II)-[cytochrome c] + 2 H(+). C-type diheme cytochrome, which is part of the SoxAX cytochrome complex involved in sulfur oxidation. The SoxAX complex catalyzes the formation of a heterodisulfide bond between the conserved cysteine residue on a sulfur carrier SoxYZ complex subunit SoxY and thiosulfate or other inorganic sulfur substrates. This leads to the liberation of two electrons, which may be transferred from the SoxAX complex to another cytochrome c that then channels them into the respiratory electron transport chain. Some electrons may be used for reductive CO(2) fixation. The polypeptide is L-cysteine S-thiosulfotransferase subunit SoxA (Paracoccus pantotrophus (Thiosphaera pantotropha)).